Consider the following 440-residue polypeptide: D-serine dehydratase (440 aa).

Lys116 carries the N6-(pyridoxal phosphate)lysine modification.

The protein belongs to the serine/threonine dehydratase family. DsdA subfamily. As to quaternary structure, monomer. Pyridoxal 5'-phosphate is required as a cofactor.

It catalyses the reaction D-serine = pyruvate + NH4(+). The sequence is that of D-serine dehydratase from Salmonella typhimurium (strain LT2 / SGSC1412 / ATCC 700720).